The primary structure comprises 512 residues: Inositol-3-phosphate synthase (512 aa).

Residues glycine 72, glycine 73, asparagine 74, asparagine 75, aspartate 145, isoleucine 182, glutamine 192, arginine 195, threonine 232, glycine 233, asparagine 234, threonine 235, glycine 283, serine 284, aspartate 308, serine 311, asparagine 342, asparagine 343, aspartate 344, lysine 357, glycine 395, aspartate 396, aspartate 424, and serine 425 each contribute to the NAD(+) site.

Belongs to the myo-inositol 1-phosphate synthase family. NAD(+) serves as cofactor.

Its subcellular location is the cytoplasm. The protein resides in the cytosol. It localises to the nucleus. It catalyses the reaction D-glucose 6-phosphate = 1D-myo-inositol 3-phosphate. Its pathway is polyol metabolism; myo-inositol biosynthesis; myo-inositol from D-glucose 6-phosphate: step 1/2. Key enzyme in myo-inositol biosynthesis pathway that catalyzes the conversion of glucose 6-phosphate to 1-myo-inositol 1-phosphate in a NAD-dependent manner. The chain is Inositol-3-phosphate synthase from Mesembryanthemum crystallinum (Common ice plant).